The sequence spans 261 residues: Small ribosomal subunit protein eS1A (261 aa).

The span at 1 to 18 shows a compositional bias: basic residues; the sequence is MTLGKNKRISKGGKRGKK. The interval 1–23 is disordered; sequence MTLGKNKRISKGGKRGKKKTQET.

Belongs to the eukaryotic ribosomal protein eS1 family. In terms of assembly, component of the small ribosomal subunit. Mature ribosomes consist of a small (40S) and a large (60S) subunit. The 40S subunit contains about 33 different proteins and 1 molecule of RNA (18S). The 60S subunit contains about 49 different proteins and 3 molecules of RNA (25S, 5.8S and 5S).

It localises to the cytoplasm. The sequence is that of Small ribosomal subunit protein eS1A from Trypanosoma cruzi (strain CL Brener).